A 375-amino-acid chain; its full sequence is 23S rRNA (uracil(747)-C(5))-methyltransferase RlmC (375 aa).

Positions 3, 11, 14, and 87 each coordinate [4Fe-4S] cluster. S-adenosyl-L-methionine contacts are provided by Q212, F241, E262, and N307. C334 functions as the Nucleophile in the catalytic mechanism.

The protein belongs to the class I-like SAM-binding methyltransferase superfamily. RNA M5U methyltransferase family. RlmC subfamily.

It catalyses the reaction uridine(747) in 23S rRNA + S-adenosyl-L-methionine = 5-methyluridine(747) in 23S rRNA + S-adenosyl-L-homocysteine + H(+). Its function is as follows. Catalyzes the formation of 5-methyl-uridine at position 747 (m5U747) in 23S rRNA. In Vibrio cholerae serotype O1 (strain ATCC 39541 / Classical Ogawa 395 / O395), this protein is 23S rRNA (uracil(747)-C(5))-methyltransferase RlmC.